The primary structure comprises 197 residues: Autophagy-related protein 33 (197 aa).

The next 3 helical transmembrane spans lie at glycine 10–threonine 30, alanine 52–proline 72, and proline 78–serine 98. Phosphoserine is present on residues serine 127 and serine 129. The span at glutamate 135–lysine 148 shows a compositional bias: basic and acidic residues. Positions glutamate 135 to valine 154 are disordered. A helical transmembrane segment spans residues leucine 172–glycine 192.

Belongs to the ATG33 family.

It is found in the mitochondrion membrane. Involved in the selective degradation of mitochondria via autophagy during starvation and at post-log phase. This chain is Autophagy-related protein 33 (ATG33), found in Saccharomyces cerevisiae (strain ATCC 204508 / S288c) (Baker's yeast).